The primary structure comprises 172 residues: MAKFQAKSQNDAPDDGLKEKMIAINRVTKVVKGGRILGFAALTVVGDGDGRVGMGKGKSKEVPAAVQKAMEEARRNMTKVSLKNGTLHHNVFGHHGAANVMMAPAPKGTGIIAGGPMRAVFEVMGITDIVAKSHGSSNPYNMVRATMDALKNSTTASDIAAKRGKSVEEIFG.

The S5 DRBM domain maps to 17–80; sequence LKEKMIAINR…EEARRNMTKV (64 aa).

It belongs to the universal ribosomal protein uS5 family. In terms of assembly, part of the 30S ribosomal subunit. Contacts proteins S4 and S8.

With S4 and S12 plays an important role in translational accuracy. Functionally, located at the back of the 30S subunit body where it stabilizes the conformation of the head with respect to the body. The protein is Small ribosomal subunit protein uS5 of Polaromonas naphthalenivorans (strain CJ2).